Here is a 538-residue protein sequence, read N- to C-terminus: MKTKFIFVTGGVVSSIGKGLASASLGALLEARGLRVSMQKLDPYINVDPGTMSPFQHGEVFVTDDGAETDLDLGHYERYTSARLSKRSNFTTGQVYFSVIEKERRGDYLGGTVQVIPHITDEIKHKILENAKGADVAIVEVGGTVGDIESLPFLEAIRQFKADRGAGNVLYLHVTLVPYIKTAGELKTKPTQHSVKELREIGIQPDILICRCEKDLPHDMKAKIALFCNVEEKGVITSADAEHIYAVPLALHKQGLDDQVVDKLNIWTKAPDLAPWESVVEKLRNPLKGEVHIAIVGKYVNLTESYKSLAEALTHGGIANDCRVYLRYLDSEKLESEGLGGLLDDVDAILVPGGFGERGTEGKIKAIEYARTRKVPFFGICLGMQMAVVEYARNVCGLDNAFSSEFRPDCANPVIHLMEEQKGVERKGGTMRLGAYPCSLSKGTFAHRAYGSLDVSERHRHRYEFNNAFREILVSKGLVISGIYKEGDLVEIVEVADHPWFLGCQFHPEFKSKPLNPHPLFRTFIAAALEHRGKRSQA.

Residues 1–266 (MKTKFIFVTG…DDQVVDKLNI (266 aa)) form an amidoligase domain region. Ser14 lines the CTP pocket. Ser14 lines the UTP pocket. Residues 15–20 (SIGKGL) and Asp72 each bind ATP. Residues Asp72 and Glu140 each contribute to the Mg(2+) site. Residues 147–149 (DIE), 187–192 (KTKPTQ), and Lys223 contribute to the CTP site. Residues 187-192 (KTKPTQ) and Lys223 each bind UTP. The 243-residue stretch at 292–534 (HIAIVGKYVN…IAAALEHRGK (243 aa)) folds into the Glutamine amidotransferase type-1 domain. L-glutamine is bound at residue Gly354. Cys381 (nucleophile; for glutamine hydrolysis) is an active-site residue. L-glutamine is bound by residues 382 to 385 (LGMQ), Glu405, and Arg462. Catalysis depends on residues His507 and Glu509.

Belongs to the CTP synthase family. In terms of assembly, homotetramer.

It catalyses the reaction UTP + L-glutamine + ATP + H2O = CTP + L-glutamate + ADP + phosphate + 2 H(+). The enzyme catalyses L-glutamine + H2O = L-glutamate + NH4(+). The catalysed reaction is UTP + NH4(+) + ATP = CTP + ADP + phosphate + 2 H(+). It participates in pyrimidine metabolism; CTP biosynthesis via de novo pathway; CTP from UDP: step 2/2. With respect to regulation, allosterically activated by GTP, when glutamine is the substrate; GTP has no effect on the reaction when ammonia is the substrate. The allosteric effector GTP functions by stabilizing the protein conformation that binds the tetrahedral intermediate(s) formed during glutamine hydrolysis. Inhibited by the product CTP, via allosteric rather than competitive inhibition. Functionally, catalyzes the ATP-dependent amination of UTP to CTP with either L-glutamine or ammonia as the source of nitrogen. Regulates intracellular CTP levels through interactions with the four ribonucleotide triphosphates. The sequence is that of CTP synthase from Geobacter metallireducens (strain ATCC 53774 / DSM 7210 / GS-15).